The chain runs to 447 residues: GTPase Der (447 aa).

2 EngA-type G domains span residues Y2–E166 and I183–W358. GTP-binding positions include G8–S15, D55–Y59, N118–D121, G189–S196, D236–L240, and N301–D304. The 85-residue stretch at K359 to E443 folds into the KH-like domain.

Belongs to the TRAFAC class TrmE-Era-EngA-EngB-Septin-like GTPase superfamily. EngA (Der) GTPase family. In terms of assembly, associates with the 50S ribosomal subunit.

Functionally, GTPase that plays an essential role in the late steps of ribosome biogenesis. The polypeptide is GTPase Der (Persephonella marina (strain DSM 14350 / EX-H1)).